The sequence spans 30 residues: Cycloviolacin-O9 (30 aa).

A cross-link (cyclopeptide (Gly-Asn)) is located at residues Gly1–Asn30. Intrachain disulfides connect Cys4–Cys20, Cys8–Cys22, and Cys13–Cys27.

Post-translationally, this is a cyclic peptide.

In terms of biological role, probably participates in a plant defense mechanism. The sequence is that of Cycloviolacin-O9 from Viola odorata (Sweet violet).